Here is a 378-residue protein sequence, read N- to C-terminus: Erythronate-4-phosphate dehydrogenase (378 aa).

Substrate-binding residues include Ser-45 and Thr-66. Asp-146 and Thr-175 together coordinate NAD(+). Arg-208 is a catalytic residue. Residue Asp-232 coordinates NAD(+). Residue Glu-237 is part of the active site. His-254 (proton donor) is an active-site residue. Gly-257 provides a ligand contact to NAD(+). A substrate-binding site is contributed by Tyr-258.

Belongs to the D-isomer specific 2-hydroxyacid dehydrogenase family. PdxB subfamily. Homodimer.

The protein localises to the cytoplasm. The catalysed reaction is 4-phospho-D-erythronate + NAD(+) = (R)-3-hydroxy-2-oxo-4-phosphooxybutanoate + NADH + H(+). It functions in the pathway cofactor biosynthesis; pyridoxine 5'-phosphate biosynthesis; pyridoxine 5'-phosphate from D-erythrose 4-phosphate: step 2/5. Its function is as follows. Catalyzes the oxidation of erythronate-4-phosphate to 3-hydroxy-2-oxo-4-phosphonooxybutanoate. The polypeptide is Erythronate-4-phosphate dehydrogenase (Shigella dysenteriae serotype 1 (strain Sd197)).